A 903-amino-acid polypeptide reads, in one-letter code: KAT8 regulatory NSL complex subunit 1-like protein (903 aa).

Disordered regions lie at residues 319–343 (DSDATGSSSDEDWDEKARQNSDECN), 419–441 (MPKSPQGTNPSPTNDLDMSPSSP), and 652–676 (TECTSSYSPDPQTPAHSWERRHRSE). Composition is skewed to polar residues over residues 423–441 (PQGTNPSPTNDLDMSPSSP) and 652–661 (TECTSSYSPD). The PEHE domain occupies 748 to 862 (EIITPSWKEV…ESPKGKTIHW (115 aa)).

The chain is KAT8 regulatory NSL complex subunit 1-like protein (kansl1l) from Xenopus tropicalis (Western clawed frog).